Reading from the N-terminus, the 496-residue chain is Squalene epoxidase ERG1 (496 aa).

A helical transmembrane segment spans residues Val4–Phe24. Residues Val15–Ile16, Glu35–Arg36, Arg43, Arg148, Val164, Asp332, and Met345 each bind FAD. The next 2 membrane-spanning stretches (helical) occupy residues Ile431–Val451 and Leu466–Phe486.

It belongs to the squalene monooxygenase family. FAD serves as cofactor.

The protein localises to the microsome membrane. It localises to the endoplasmic reticulum membrane. The enzyme catalyses squalene + reduced [NADPH--hemoprotein reductase] + O2 = (S)-2,3-epoxysqualene + oxidized [NADPH--hemoprotein reductase] + H2O + H(+). The protein operates within terpene metabolism; lanosterol biosynthesis; lanosterol from farnesyl diphosphate: step 2/3. Activity is completely abolished by Triton X-100, deoxycholate or Cu(2+), and partially inhibited by thiol reagents, rotenone and antimycin A. The allylamine antimycotic agents naftifine and SF 86-327are potent inhibitors and show apparently non-competitive kinetics with respect to the substrate squalene. Functionally, squalene epoxidase; part of the third module of ergosterol biosynthesis pathway that includes the late steps of the pathway. Erg1 catalyzes the epoxidation of squalene into 2,3-epoxysqualene. The third module or late pathway involves the ergosterol synthesis itself through consecutive reactions that mainly occur in the endoplasmic reticulum (ER) membrane. Firstly, the squalene synthase ERG9 catalyzes the condensation of 2 farnesyl pyrophosphate moieties to form squalene, which is the precursor of all steroids. Squalene synthase is crucial for balancing the incorporation of farnesyl diphosphate (FPP) into sterol and nonsterol isoprene synthesis. Secondly, the squalene epoxidase ERG1 catalyzes the stereospecific oxidation of squalene to (S)-2,3-epoxysqualene, which is considered to be a rate-limiting enzyme in steroid biosynthesis. Then, the lanosterol synthase ERG7 catalyzes the cyclization of (S)-2,3 oxidosqualene to lanosterol, a reaction that forms the sterol core. In the next steps, lanosterol is transformed to zymosterol through a complex process involving various demethylation, reduction and desaturation reactions. The lanosterol 14-alpha-demethylase ERG11 (also known as CYP51) catalyzes C14-demethylation of lanosterol to produce 4,4'-dimethyl cholesta-8,14,24-triene-3-beta-ol, which is critical for ergosterol biosynthesis. The C-14 reductase ERG24 reduces the C14=C15 double bond of 4,4-dimethyl-cholesta-8,14,24-trienol to produce 4,4-dimethyl-cholesta-8,24-dienol. 4,4-dimethyl-cholesta-8,24-dienol is substrate of the C-4 demethylation complex ERG25-ERG26-ERG27 in which ERG25 catalyzes the three-step monooxygenation required for the demethylation of 4,4-dimethyl and 4alpha-methylsterols, ERG26 catalyzes the oxidative decarboxylation that results in a reduction of the 3-beta-hydroxy group at the C-3 carbon to an oxo group, and ERG27 is responsible for the reduction of the keto group on the C-3. ERG28 has a role as a scaffold to help anchor ERG25, ERG26 and ERG27 to the endoplasmic reticulum and ERG29 regulates the activity of the iron-containing C4-methylsterol oxidase ERG25. Then, the sterol 24-C-methyltransferase ERG6 catalyzes the methyl transfer from S-adenosyl-methionine to the C-24 of zymosterol to form fecosterol. The C-8 sterol isomerase ERG2 catalyzes the reaction which results in unsaturation at C-7 in the B ring of sterols and thus converts fecosterol to episterol. The sterol-C5-desaturase ERG3 then catalyzes the introduction of a C-5 double bond in the B ring to produce 5-dehydroepisterol. The C-22 sterol desaturase ERG5 further converts 5-dehydroepisterol into ergosta-5,7,22,24(28)-tetraen-3beta-ol by forming the C-22(23) double bond in the sterol side chain. Finally, ergosta-5,7,22,24(28)-tetraen-3beta-ol is substrate of the C-24(28) sterol reductase ERG4 to produce ergosterol. The sequence is that of Squalene epoxidase ERG1 from Candida albicans (strain SC5314 / ATCC MYA-2876) (Yeast).